A 297-amino-acid chain; its full sequence is Acetyl-coenzyme A carboxylase carboxyl transferase subunit beta (297 aa).

The CoA carboxyltransferase N-terminal domain maps to 25 to 294 (LWVKCPETGQ…VPPKGRLPAP (270 aa)).

It belongs to the AccD/PCCB family. Acetyl-CoA carboxylase is a heterohexamer composed of biotin carboxyl carrier protein (AccB), biotin carboxylase (AccC) and two subunits each of ACCase subunit alpha (AccA) and ACCase subunit beta (AccD).

It localises to the cytoplasm. The catalysed reaction is N(6)-carboxybiotinyl-L-lysyl-[protein] + acetyl-CoA = N(6)-biotinyl-L-lysyl-[protein] + malonyl-CoA. It functions in the pathway lipid metabolism; malonyl-CoA biosynthesis; malonyl-CoA from acetyl-CoA: step 1/1. In terms of biological role, component of the acetyl coenzyme A carboxylase (ACC) complex. Biotin carboxylase (BC) catalyzes the carboxylation of biotin on its carrier protein (BCCP) and then the CO(2) group is transferred by the transcarboxylase to acetyl-CoA to form malonyl-CoA. This Azorhizobium caulinodans (strain ATCC 43989 / DSM 5975 / JCM 20966 / LMG 6465 / NBRC 14845 / NCIMB 13405 / ORS 571) protein is Acetyl-coenzyme A carboxylase carboxyl transferase subunit beta.